A 111-amino-acid chain; its full sequence is Resistin-like alpha (111 aa).

The first 23 residues, 1 to 23 (MKTTTCSLLICISLLQLMVPVNT), serve as a signal peptide directing secretion. 5 cysteine pairs are disulfide-bonded: cysteine 55/cysteine 108, cysteine 67/cysteine 107, cysteine 76/cysteine 93, cysteine 78/cysteine 95, and cysteine 82/cysteine 97.

It belongs to the resistin/FIZZ family. As to quaternary structure, monomer. As to expression, highest levels in adipose tissue.

Its subcellular location is the secreted. Probable hormone. Plays a role in pulmonary vascular remodeling. This Mus musculus (Mouse) protein is Resistin-like alpha (Retnla).